The chain runs to 381 residues: MAKKQKKLDDITKKFGDEREKALNDALKLIEKDFGKGSIMRLGERAEQKVQVMSSGSLALDIALGAGGYPKGRIIEIYGPESSGKTTVALHAVAQAQKEGGIAAFIDAEHALDPSYAAALGVNIDELLLSQPDSGEQGLEIAGKLIDSGAVDLVVVDSVAALVPRAEIDGDIGDSHVGLQARMMSQAMRKLGASINKTKTIAIFINQLREKVGVMFGNPETTPGGRALKFYASVRLDVRGNTQIKGTGDQKDTNVGKETKIKVVKNKVAPPFKEAMVEIMYGEGISRTGELVKIATDLDIIQKAGAWYSYNGEKIGQGSENAKKFLADHPEIFDEIDHKVRVHFGLIEKDEAVKSLDKTEEAAPVVEEVTLDLDDAIEIED.

Position 79–86 (79–86) interacts with ATP; it reads GPESSGKT.

The protein belongs to the RecA family.

The protein localises to the cytoplasm. Functionally, can catalyze the hydrolysis of ATP in the presence of single-stranded DNA, the ATP-dependent uptake of single-stranded DNA by duplex DNA, and the ATP-dependent hybridization of homologous single-stranded DNAs. It interacts with LexA causing its activation and leading to its autocatalytic cleavage. The chain is Protein RecA from Streptococcus parasanguinis.